The primary structure comprises 365 residues: 3-isopropylmalate dehydrogenase (365 aa).

Position 78 to 91 (78 to 91) interacts with NAD(+); that stretch reads GKKWNNLPIEKRPE. Substrate is bound by residues Arg-99, Arg-109, Arg-139, and Asp-228. Residues Asp-228, Asp-252, and Asp-256 each coordinate Mg(2+). 286–298 serves as a coordination point for NAD(+); the sequence is GSAPDIAGKNIAN.

The protein belongs to the isocitrate and isopropylmalate dehydrogenases family. LeuB type 1 subfamily. As to quaternary structure, homodimer. Requires Mg(2+) as cofactor. The cofactor is Mn(2+).

It is found in the cytoplasm. The catalysed reaction is (2R,3S)-3-isopropylmalate + NAD(+) = 4-methyl-2-oxopentanoate + CO2 + NADH. Its pathway is amino-acid biosynthesis; L-leucine biosynthesis; L-leucine from 3-methyl-2-oxobutanoate: step 3/4. Its function is as follows. Catalyzes the oxidation of 3-carboxy-2-hydroxy-4-methylpentanoate (3-isopropylmalate) to 3-carboxy-4-methyl-2-oxopentanoate. The product decarboxylates to 4-methyl-2 oxopentanoate. This chain is 3-isopropylmalate dehydrogenase, found in Buchnera aphidicola subsp. Macrosiphoniella ludovicianae.